The primary structure comprises 346 residues: N-acetyl-gamma-glutamyl-phosphate reductase (346 aa).

The active site involves cysteine 149.

This sequence belongs to the NAGSA dehydrogenase family. Type 1 subfamily.

It is found in the cytoplasm. It carries out the reaction N-acetyl-L-glutamate 5-semialdehyde + phosphate + NADP(+) = N-acetyl-L-glutamyl 5-phosphate + NADPH + H(+). It functions in the pathway amino-acid biosynthesis; L-arginine biosynthesis; N(2)-acetyl-L-ornithine from L-glutamate: step 3/4. In terms of biological role, catalyzes the NADPH-dependent reduction of N-acetyl-5-glutamyl phosphate to yield N-acetyl-L-glutamate 5-semialdehyde. This Desulfotalea psychrophila (strain LSv54 / DSM 12343) protein is N-acetyl-gamma-glutamyl-phosphate reductase.